The following is a 292-amino-acid chain: Ribosomal protein L11 methyltransferase (292 aa).

S-adenosyl-L-methionine contacts are provided by T136, G159, D181, and N228.

The protein belongs to the methyltransferase superfamily. PrmA family.

The protein localises to the cytoplasm. The enzyme catalyses L-lysyl-[protein] + 3 S-adenosyl-L-methionine = N(6),N(6),N(6)-trimethyl-L-lysyl-[protein] + 3 S-adenosyl-L-homocysteine + 3 H(+). Methylates ribosomal protein L11. The protein is Ribosomal protein L11 methyltransferase of Rhizobium johnstonii (strain DSM 114642 / LMG 32736 / 3841) (Rhizobium leguminosarum bv. viciae).